A 252-amino-acid polypeptide reads, in one-letter code: Ditrans,polycis-undecaprenyl-diphosphate synthase ((2E,6E)-farnesyl-diphosphate specific) (252 aa).

The active site involves D25. D25 contacts Mg(2+). Substrate-binding positions include 26 to 29, W30, R38, H42, and 70 to 72; these read GNGR and SSE. N73 acts as the Proton acceptor in catalysis. W74, R76, and R193 together coordinate substrate. H198 provides a ligand contact to Mg(2+). Substrate is bound at residue 199–201; it reads RIS. A Mg(2+)-binding site is contributed by E212.

Belongs to the UPP synthase family. Homodimer. It depends on Mg(2+) as a cofactor.

The enzyme catalyses 8 isopentenyl diphosphate + (2E,6E)-farnesyl diphosphate = di-trans,octa-cis-undecaprenyl diphosphate + 8 diphosphate. Functionally, catalyzes the sequential condensation of isopentenyl diphosphate (IPP) with (2E,6E)-farnesyl diphosphate (E,E-FPP) to yield (2Z,6Z,10Z,14Z,18Z,22Z,26Z,30Z,34E,38E)-undecaprenyl diphosphate (di-trans,octa-cis-UPP). UPP is the precursor of glycosyl carrier lipid in the biosynthesis of bacterial cell wall polysaccharide components such as peptidoglycan and lipopolysaccharide. This is Ditrans,polycis-undecaprenyl-diphosphate synthase ((2E,6E)-farnesyl-diphosphate specific) from Salmonella typhi.